The following is a 317-amino-acid chain: ADP-L-glycero-D-manno-heptose-6-epimerase (317 aa).

Residues F10–I11, D31–D32, K38, K53, Q76–S80, and N93 contribute to the NADP(+) site. Y140 (proton acceptor) is an active-site residue. NADP(+) is bound at residue K144. Residue N169 participates in substrate binding. NADP(+)-binding residues include I170 and K178. The active-site Proton acceptor is K178. Substrate is bound by residues A180, H187, F201–C204, R214, and Y278.

It belongs to the NAD(P)-dependent epimerase/dehydratase family. HldD subfamily. In terms of assembly, homopentamer. Requires NADP(+) as cofactor.

The enzyme catalyses ADP-D-glycero-beta-D-manno-heptose = ADP-L-glycero-beta-D-manno-heptose. It functions in the pathway nucleotide-sugar biosynthesis; ADP-L-glycero-beta-D-manno-heptose biosynthesis; ADP-L-glycero-beta-D-manno-heptose from D-glycero-beta-D-manno-heptose 7-phosphate: step 4/4. Its function is as follows. Catalyzes the interconversion between ADP-D-glycero-beta-D-manno-heptose and ADP-L-glycero-beta-D-manno-heptose via an epimerization at carbon 6 of the heptose. The protein is ADP-L-glycero-D-manno-heptose-6-epimerase of Nitrosococcus oceani (strain ATCC 19707 / BCRC 17464 / JCM 30415 / NCIMB 11848 / C-107).